We begin with the raw amino-acid sequence, 333 residues long: D-2-hydroxyacid dehydrogenase (NAD+) (333 aa).

Tyrosine 100 contacts 4-methyl-2-oxopentanoate. The NAD(+) site is built by histidine 155, isoleucine 156, aspartate 175, valine 205, asparagine 211, threonine 232, arginine 234, and aspartate 258. Residue arginine 234 is part of the active site. Glutamate 263 is an active-site residue. Histidine 295 is a binding site for 4-methyl-2-oxopentanoate. The active-site Proton donor is the histidine 295.

The protein belongs to the D-isomer specific 2-hydroxyacid dehydrogenase family. In terms of assembly, homodimer.

The catalysed reaction is a (2R)-2-hydroxycarboxylate + NAD(+) = a 2-oxocarboxylate + NADH + H(+). It carries out the reaction (2R)-hydroxy-4-methylpentanoate + NAD(+) = 4-methyl-2-oxopentanoate + NADH + H(+). The enzyme catalyses (R)-3-phenyllactate + NAD(+) = 3-phenylpyruvate + NADH + H(+). Its activity is regulated as follows. Completely inhibited In the presence of 0.1 mM Hg(2+). No influence on the activity could be detected with Mg(2+) and Ca(2+) and only very weak effects with Cd(2+), Co(2+) and Mn(2+). Reducing agents and thiol group reagents do not affect catalytic activity. Functionally, catalyzes the NADH-dependent reversible reduction of various 2-ketocarboxylic acids to the corresponding D-2-hydroxycarboxylic acids. In vitro can use various substrates, including 4-methyl-2-oxopentanoate (2-oxoisocaproate), 2-oxopentanoate, 2-oxohexanoate and phenylpyruvate. The chain is D-2-hydroxyacid dehydrogenase (NAD+) from Lacticaseibacillus paracasei (Lactobacillus paracasei).